Here is a 293-residue protein sequence, read N- to C-terminus: tRNA (guanine-N(7)-)-methyltransferase (293 aa).

A compositionally biased stretch (basic and acidic residues) spans 1–31 (MGGDKIKKDKRQKREDYRAAMRKDDISELPR). Disordered stretches follow at residues 1–33 (MGGD…PRKK) and 68–97 (IVDE…TPLR). The span at 75–85 (TSPPPPPPVPE) shows a compositional bias: pro residues. S-adenosyl-L-methionine contacts are provided by residues glycine 111, 134 to 135 (EI), 169 to 170 (NT), and cysteine 189. Aspartate 192 is an active-site residue. 267–269 (TEE) is a binding site for S-adenosyl-L-methionine.

The protein belongs to the class I-like SAM-binding methyltransferase superfamily. TrmB family. In terms of assembly, forms a complex with TRM82.

Its subcellular location is the nucleus. The catalysed reaction is guanosine(46) in tRNA + S-adenosyl-L-methionine = N(7)-methylguanosine(46) in tRNA + S-adenosyl-L-homocysteine. The protein operates within tRNA modification; N(7)-methylguanine-tRNA biosynthesis. Functionally, catalyzes the formation of N(7)-methylguanine at position 46 (m7G46) in tRNA. The polypeptide is tRNA (guanine-N(7)-)-methyltransferase (Chaetomium globosum (strain ATCC 6205 / CBS 148.51 / DSM 1962 / NBRC 6347 / NRRL 1970) (Soil fungus)).